The following is a 273-amino-acid chain: Ribosomal RNA small subunit methyltransferase A (273 aa).

S-adenosyl-L-methionine contacts are provided by Asn-18, Leu-20, Gly-45, Glu-66, Asp-91, and Asn-113.

It belongs to the class I-like SAM-binding methyltransferase superfamily. rRNA adenine N(6)-methyltransferase family. RsmA subfamily.

Its subcellular location is the cytoplasm. It carries out the reaction adenosine(1518)/adenosine(1519) in 16S rRNA + 4 S-adenosyl-L-methionine = N(6)-dimethyladenosine(1518)/N(6)-dimethyladenosine(1519) in 16S rRNA + 4 S-adenosyl-L-homocysteine + 4 H(+). Functionally, specifically dimethylates two adjacent adenosines (A1518 and A1519) in the loop of a conserved hairpin near the 3'-end of 16S rRNA in the 30S particle. May play a critical role in biogenesis of 30S subunits. This Cronobacter sakazakii (strain ATCC BAA-894) (Enterobacter sakazakii) protein is Ribosomal RNA small subunit methyltransferase A.